The primary structure comprises 156 residues: MGVSLLWALLQDMVLAAIPALGFAMVFNVPVRALRYCALLGAIGHGSRMLMIHFGMNIELASLVASIMIGVIGINWSRWLLAHPKVFTVAAVIPMFPGISAYTAMISVVEISHLGYSEALMSTMVTNFLKASFIVGALSIGLSLPGLWLYRKRPGV.

The next 4 membrane-spanning stretches (helical) occupy residues 7-27 (WALL…AMVF), 54-74 (FGMN…VIGI), 86-106 (VFTV…TAMI), and 128-148 (FLKA…PGLW).

Belongs to the ThrE exporter (TC 2.A.79) family. As to quaternary structure, the transporter is composed of YjjB and YjjP.

It is found in the cell inner membrane. Involved in succinate export with YjjP. Both proteins are required for export. This is Probable succinate transporter subunit YjjB from Yersinia pseudotuberculosis serotype I (strain IP32953).